Reading from the N-terminus, the 845-residue chain is Ribosome-releasing factor 2, mitochondrial (845 aa).

A mitochondrion-targeting transit peptide spans methionine 1–leucine 28. A tr-type G domain is found at aspartate 38–leucine 330. GTP is bound by residues alanine 47 to threonine 54, aspartate 111 to histidine 115, and asparagine 165 to aspartate 168.

This sequence belongs to the TRAFAC class translation factor GTPase superfamily. Classic translation factor GTPase family. EF-G/EF-2 subfamily.

It is found in the mitochondrion. In terms of biological role, mitochondrial GTPase that mediates the disassembly of ribosomes from messenger RNA at the termination of mitochondrial protein biosynthesis. Not involved in the GTP-dependent ribosomal translocation step during translation elongation. This chain is Ribosome-releasing factor 2, mitochondrial, found in Scheffersomyces stipitis (strain ATCC 58785 / CBS 6054 / NBRC 10063 / NRRL Y-11545) (Yeast).